Here is a 127-residue protein sequence, read N- to C-terminus: Ribonuclease P protein component (127 aa).

Belongs to the RnpA family. Consists of a catalytic RNA component (M1 or rnpB) and a protein subunit.

It carries out the reaction Endonucleolytic cleavage of RNA, removing 5'-extranucleotides from tRNA precursor.. RNaseP catalyzes the removal of the 5'-leader sequence from pre-tRNA to produce the mature 5'-terminus. It can also cleave other RNA substrates such as 4.5S RNA. The protein component plays an auxiliary but essential role in vivo by binding to the 5'-leader sequence and broadening the substrate specificity of the ribozyme. This Prochlorococcus marinus (strain SARG / CCMP1375 / SS120) protein is Ribonuclease P protein component.